The following is a 90-amino-acid chain: Small ribosomal subunit protein mS37 (90 aa).

An intrachain disulfide couples Cys-27 to Cys-58.

The protein belongs to the mitochondrion-specific ribosomal protein mS37 family. In terms of assembly, component of the mitochondrial small ribosomal subunit (mt-SSU). Mature N.crassa 74S mitochondrial ribosomes consist of a small (37S) and a large (54S) subunit. The 37S small subunit contains a 16S ribosomal RNA (16S mt-rRNA) and 32 different proteins. The 54S large subunit contains a 23S rRNA (23S mt-rRNA) and 42 different proteins.

It localises to the mitochondrion. In terms of biological role, component of the mitochondrial ribosome (mitoribosome), a dedicated translation machinery responsible for the synthesis of mitochondrial genome-encoded proteins, including at least some of the essential transmembrane subunits of the mitochondrial respiratory chain. The mitoribosomes are attached to the mitochondrial inner membrane and translation products are cotranslationally integrated into the membrane. The protein is Small ribosomal subunit protein mS37 (mrp10) of Neurospora crassa (strain ATCC 24698 / 74-OR23-1A / CBS 708.71 / DSM 1257 / FGSC 987).